Consider the following 557-residue polypeptide: Syntaxin-binding protein 4 (557 aa).

Phosphoserine is present on residues S10 and S12. The 87-residue stretch at 19–105 (AFRVITVTKE…RSESPWEIAF (87 aa)) folds into the PDZ domain. Position 99 is a phosphoserine; by PKB/AKT2 (S99). Residues 142–154 (PSETLLPKTSSTP) show a composition bias toward low complexity. The tract at residues 142–214 (PSETLLPKTS…SGPQGKISLN (73 aa)) is disordered. Over residues 179–194 (SPITSLDNSPADTSNA) the composition is skewed to polar residues. Position 216 is a phosphoserine (S216). A coiled-coil region spans residues 298 to 408 (ADEVGKLRQE…NKESVQDLRK (111 aa)). S467 bears the Phosphoserine mark. Positions 500 to 533 (DCLPYGWEEAYTADGIKYFINHVTQTTSWIHPVM) constitute a WW domain.

As to quaternary structure, interacts with STX4A. In terms of processing, phosphorylated on Ser-99 by PKB/AKT2 after insulin treatment. Phosphorylation on Ser-99 abolishes the interaction with STX4A. Detected in skeletal muscle, heart, testis, adipocytes and pancreatic islet cells.

It localises to the cytoplasm. Plays a role in the translocation of transport vesicles from the cytoplasm to the plasma membrane. Inhibits the translocation of SLC2A4 from intracellular vesicles to the plasma membrane by STX4A binding and preventing the interaction between STX4A and VAMP2. Stimulation with insulin disrupts the interaction with STX4A, leading to increased levels of SLC2A4 at the plasma membrane. May also play a role in the regulation of insulin release by pancreatic beta cells after stimulation by glucose. The protein is Syntaxin-binding protein 4 (Stxbp4) of Mus musculus (Mouse).